The chain runs to 144 residues: Phospholipase A2, membrane associated (144 aa).

Residues 1 to 20 (MKTLLLLAVIMIFGLLQAHG) form the signal peptide. Disulfide bonds link cysteine 46-cysteine 137, cysteine 48-cysteine 64, cysteine 63-cysteine 117, cysteine 69-cysteine 144, cysteine 70-cysteine 110, cysteine 79-cysteine 103, and cysteine 97-cysteine 108. Residues histidine 47, glycine 49, and glycine 51 each contribute to the Ca(2+) site. Histidine 67 is an active-site residue. Aspartate 68 is a binding site for Ca(2+). Aspartate 111 is an active-site residue.

It belongs to the phospholipase A2 family. Ca(2+) is required as a cofactor. Expressed in various tissues including heart, kidney, liver, lung, pancreas, placenta, skeletal muscle, prostate, ovary, colon and small intestine. Not detected in lymphoid organs and brain. Expressed in platelets (at protein level).

The protein resides in the secreted. It is found in the cell membrane. The protein localises to the mitochondrion outer membrane. The enzyme catalyses a 1,2-diacyl-sn-glycero-3-phosphoethanolamine + H2O = a 1-acyl-sn-glycero-3-phosphoethanolamine + a fatty acid + H(+). It catalyses the reaction 1-hexadecanoyl-2-(9Z-octadecenoyl)-sn-glycero-3-phosphoethanolamine + H2O = 1-hexadecanoyl-sn-glycero-3-phosphoethanolamine + (9Z)-octadecenoate + H(+). It carries out the reaction 1-hexadecanoyl-2-(9Z,12Z-octadecadienoyl)-sn-glycero-3-phosphoethanolamine + H2O = 1-hexadecanoyl-sn-glycero-3-phosphoethanolamine + (9Z,12Z)-octadecadienoate + H(+). The catalysed reaction is 1-hexadecanoyl-2-(5Z,8Z,11Z,14Z-eicosatetraenoyl)-sn-glycero-3-phosphoethanolamine + H2O = 1-hexadecanoyl-sn-glycero-3-phosphoethanolamine + (5Z,8Z,11Z,14Z)-eicosatetraenoate + H(+). The enzyme catalyses N-hexadecanoyl-1,2-di-(9Z-octadecenoyl)-sn-glycero-3-phosphoethanolamine + H2O = N-hexadecanoyl-1-(9Z-octadecenoyl)-sn-glycero-3-phosphoethanolamine + (9Z)-octadecenoate + H(+). It catalyses the reaction 1,2-dihexadecanoyl-sn-glycero-3-phospho-(1'-sn-glycerol) + H2O = 1-hexadecanoyl-sn-glycero-3-phospho-(1'-sn-glycerol) + hexadecanoate + H(+). It carries out the reaction 1-hexadecanoyl-2-(9Z-octadecenoyl)-sn-glycero-3-phosphoglycerol + H2O = 1-hexadecanoyl-sn-glycero-3-phosphoglycerol + (9Z)-octadecenoate + H(+). The catalysed reaction is 1-hexadecanoyl-2-(9Z-octadecenoyl)-sn-glycero-3-phospho-(1'-sn-glycerol) + H2O = 1-hexadecanoyl-sn-glycero-3-phospho-(1'-sn-glycerol) + (9Z)-octadecenoate + H(+). The enzyme catalyses a 1,2-diacyl-sn-glycero-3-phosphocholine + H2O = a 1-acyl-sn-glycero-3-phosphocholine + a fatty acid + H(+). It catalyses the reaction 1,2-dihexadecanoyl-sn-glycero-3-phosphocholine + H2O = 1-hexadecanoyl-sn-glycero-3-phosphocholine + hexadecanoate + H(+). It carries out the reaction 1-hexadecanoyl-2-(9Z-octadecenoyl)-sn-glycero-3-phosphocholine + H2O = 1-hexadecanoyl-sn-glycero-3-phosphocholine + (9Z)-octadecenoate + H(+). The catalysed reaction is 1-hexadecanoyl-2-(9Z,12Z-octadecadienoyl)-sn-glycero-3-phosphocholine + H2O = (9Z,12Z)-octadecadienoate + 1-hexadecanoyl-sn-glycero-3-phosphocholine + H(+). The enzyme catalyses 1-hexadecanoyl-2-(4Z,7Z,10Z,13Z,16Z,19Z-docosahexaenoyl)-sn-glycero-3-phosphocholine + H2O = (4Z,7Z,10Z,13Z,16Z,19Z)-docosahexaenoate + 1-hexadecanoyl-sn-glycero-3-phosphocholine + H(+). Its function is as follows. Secretory calcium-dependent phospholipase A2 that primarily targets extracellular phospholipids with implications in host antimicrobial defense, inflammatory response and tissue regeneration. Hydrolyzes the ester bond of the fatty acyl group attached at sn-2 position of phospholipids (phospholipase A2 activity) with preference for phosphatidylethanolamines and phosphatidylglycerols over phosphatidylcholines. Contributes to lipid remodeling of cellular membranes and generation of lipid mediators involved in pathogen clearance. Displays bactericidal activity against Gram-positive bacteria by directly hydrolyzing phospholipids of the bacterial membrane. Upon sterile inflammation, targets membrane phospholipids of extracellular mitochondria released from activated platelets, generating free unsaturated fatty acids such as arachidonate that is used by neighboring leukocytes to synthesize inflammatory eicosanoids such as leukotrienes. Simultaneously, by compromising mitochondrial membrane integrity, promotes the release in circulation of potent damage-associated molecular pattern molecules that activate the innate immune response. Plays a stem cell regulator role in the intestinal crypt. Within intracellular compartment mediates Paneth cell differentiation and its stem cell supporting functions by inhibiting Wnt signaling pathway in intestinal stem cell (ICS). Secreted in the intestinal lumen upon inflammation, acts in an autocrine way and promotes prostaglandin E2 synthesis that stimulates Wnt signaling pathway in ICS cells and tissue regeneration. May play a role in the biosynthesis of N-acyl ethanolamines that regulate energy metabolism and inflammation. Hydrolyzes N-acyl phosphatidylethanolamines to N-acyl lysophosphatidylethanolamines, which are further cleaved by a lysophospholipase D to release N-acyl ethanolamines. Independent of its catalytic activity, acts as a ligand for integrins. Binds to and activates integrins ITGAV:ITGB3, ITGA4:ITGB1 and ITGA5:ITGB1. Binds to a site (site 2) which is distinct from the classical ligand-binding site (site 1) and induces integrin conformational changes and enhanced ligand binding to site 1. Induces cell proliferation in an integrin-dependent manner. The sequence is that of Phospholipase A2, membrane associated (PLA2G2A) from Homo sapiens (Human).